The chain runs to 371 residues: Terpene cyclase 6 (371 aa).

Residues Asp144, Asn266, Ser270, and Glu274 each contribute to the Mg(2+) site. The D(D/E)XX(D/E) motif motif lies at 144–148 (DDVME). Residues 266–274 (NDLYSYDKE) carry the NSE motif motif. Residues 352-359 (HHATLGRY) carry the WxxxxxRY motif motif. The (2E,6E)-farnesyl diphosphate site is built by Arg358 and Tyr359.

This sequence belongs to the terpene synthase family. In terms of assembly, homodimer. Mg(2+) is required as a cofactor.

It catalyses the reaction (2E,6E)-farnesyl diphosphate + H2O = (-)-alpha-acorenol + diphosphate. It functions in the pathway sesquiterpene biosynthesis. Its function is as follows. Terpene cyclase that catalyzes the cyclization of farnesyl diphosphate (FPP) to the spirocyclic sesquiterpene alpha-acorenol. The sequence is that of Terpene cyclase 6 from Gibberella fujikuroi (strain CBS 195.34 / IMI 58289 / NRRL A-6831) (Bakanae and foot rot disease fungus).